The primary structure comprises 603 residues: Elongation factor 4 (603 aa).

One can recognise a tr-type G domain in the interval 7–189; that stretch reads KKIRNFCIIA…SVVKNVPPPE (183 aa). Residues 19–24 and 136–139 each bind GTP; these read DHGKST and NKID.

Belongs to the TRAFAC class translation factor GTPase superfamily. Classic translation factor GTPase family. LepA subfamily.

The protein localises to the cell membrane. The enzyme catalyses GTP + H2O = GDP + phosphate + H(+). Functionally, required for accurate and efficient protein synthesis under certain stress conditions. May act as a fidelity factor of the translation reaction, by catalyzing a one-codon backward translocation of tRNAs on improperly translocated ribosomes. Back-translocation proceeds from a post-translocation (POST) complex to a pre-translocation (PRE) complex, thus giving elongation factor G a second chance to translocate the tRNAs correctly. Binds to ribosomes in a GTP-dependent manner. This Acetivibrio thermocellus (strain ATCC 27405 / DSM 1237 / JCM 9322 / NBRC 103400 / NCIMB 10682 / NRRL B-4536 / VPI 7372) (Clostridium thermocellum) protein is Elongation factor 4.